The following is a 44-amino-acid chain: Protein PsbN (44 aa).

A helical membrane pass occupies residues 6 to 26 (FFFTFFLWFLLLSATGYSIYV).

Belongs to the PsbN family.

The protein resides in the plastid. The protein localises to the chloroplast thylakoid membrane. Its function is as follows. May play a role in photosystem I and II biogenesis. The protein is Protein PsbN of Tetradesmus obliquus (Green alga).